Consider the following 332-residue polypeptide: Casein kinase II subunit alpha (332 aa).

A Protein kinase domain is found at 34 to 319; that stretch reads YEVVRKVGRG…ALEAMTHPYF (286 aa). ATP contacts are provided by residues 40 to 48 and lysine 63; that span reads VGRGKYSEV. Aspartate 151 serves as the catalytic Proton acceptor.

This sequence belongs to the protein kinase superfamily. Ser/Thr protein kinase family. CK2 subfamily. As to quaternary structure, tetramer of two alpha and two beta chains (possible).

It catalyses the reaction L-seryl-[protein] + ATP = O-phospho-L-seryl-[protein] + ADP + H(+). The catalysed reaction is L-threonyl-[protein] + ATP = O-phospho-L-threonyl-[protein] + ADP + H(+). Its function is as follows. Casein kinases are operationally defined by their preferential utilization of acidic proteins such as caseins as substrates. The alpha chain contains the catalytic site. This Zea mays (Maize) protein is Casein kinase II subunit alpha (ACK2).